Reading from the N-terminus, the 253-residue chain is Imidazole glycerol phosphate synthase subunit HisF (253 aa).

Residues Asp11 and Asp130 contribute to the active site.

The protein belongs to the HisA/HisF family. As to quaternary structure, heterodimer of HisH and HisF.

Its subcellular location is the cytoplasm. It carries out the reaction 5-[(5-phospho-1-deoxy-D-ribulos-1-ylimino)methylamino]-1-(5-phospho-beta-D-ribosyl)imidazole-4-carboxamide + L-glutamine = D-erythro-1-(imidazol-4-yl)glycerol 3-phosphate + 5-amino-1-(5-phospho-beta-D-ribosyl)imidazole-4-carboxamide + L-glutamate + H(+). It participates in amino-acid biosynthesis; L-histidine biosynthesis; L-histidine from 5-phospho-alpha-D-ribose 1-diphosphate: step 5/9. IGPS catalyzes the conversion of PRFAR and glutamine to IGP, AICAR and glutamate. The HisF subunit catalyzes the cyclization activity that produces IGP and AICAR from PRFAR using the ammonia provided by the HisH subunit. This chain is Imidazole glycerol phosphate synthase subunit HisF, found in Opitutus terrae (strain DSM 11246 / JCM 15787 / PB90-1).